The sequence spans 243 residues: rRNA adenine N-6-methyltransferase (243 aa).

6 residues coordinate S-adenosyl-L-methionine: N11, I13, G38, E59, D84, and N101.

It belongs to the class I-like SAM-binding methyltransferase superfamily. rRNA adenine N(6)-methyltransferase family.

It catalyses the reaction adenosine(2085) in 23S rRNA + 2 S-adenosyl-L-methionine = N(6)-dimethyladenosine(2085) in 23S rRNA + 2 S-adenosyl-L-homocysteine + 2 H(+). This protein produces a dimethylation of the adenine residue at position 2085 in 23S rRNA, resulting in reduced affinity between ribosomes and macrolide-lincosamide-streptogramin B antibiotics. In Staphylococcus aureus (strain Mu50 / ATCC 700699), this protein is rRNA adenine N-6-methyltransferase (ermA1).